We begin with the raw amino-acid sequence, 1011 residues long: E3 ubiquitin-protein ligase mib1 (1011 aa).

The MIB/HERC2 1 domain occupies 6–74 (NNRVMVEGVG…AYDLRIMDSA (69 aa)). The ZZ-type zinc-finger motif lies at 80 to 132 (HDGTMCDTCRQQPIIGIRWKCAECTNYDLCTVCYHGDKHHLRHRFYRITTPGS). Zn(2+) contacts are provided by Cys85, Cys88, Cys100, Cys103, Cys109, Cys112, His118, and His122. The region spanning 143 to 221 (SKKITARGIF…MSDLKCVQDA (79 aa)) is the MIB/HERC2 2 domain. 9 ANK repeats span residues 430-460 (DLNE…DVNG), 463-492 (AGHT…DVEA), 496-525 (DGDR…DLNA), 529-558 (RRQT…HPSL), 562-591 (EGDT…DVTI), 595-627 (NGFN…IVDE), 631-661 (DGYT…NLDI), 665-694 (NQQT…KLDI), and 698-729 (DGDT…KVDT). 2 consecutive RING-type zinc fingers follow at residues 820-855 (CMVC…LLCK) and 867-902 (CVVC…VQCR). Residues 936–963 (QKDKDNTNVNADVQKLQQQLQDIKEQTM) adopt a coiled-coil conformation. The segment at 964 to 997 (CPVCLDRLKNMIFMCGHGTCQLCGDRMSECPICR) adopts an RING-type 3 zinc-finger fold.

The protein localises to the cytoplasm. Its subcellular location is the cytoskeleton. It localises to the microtubule organizing center. The protein resides in the centrosome. It is found in the centriolar satellite. It carries out the reaction S-ubiquitinyl-[E2 ubiquitin-conjugating enzyme]-L-cysteine + [acceptor protein]-L-lysine = [E2 ubiquitin-conjugating enzyme]-L-cysteine + N(6)-ubiquitinyl-[acceptor protein]-L-lysine.. The protein operates within protein modification; protein ubiquitination. E3 ubiquitin-protein ligase that mediates ubiquitination of Delta receptors, which act as ligands of Notch proteins. Positively regulates the Delta-mediated Notch signaling by ubiquitinating the intracellular domain of Delta, leading to endocytosis of Delta receptors. In Xenopus laevis (African clawed frog), this protein is E3 ubiquitin-protein ligase mib1 (mib1).